The following is a 231-amino-acid chain: Ion-translocating oxidoreductase complex subunit E (231 aa).

Helical transmembrane passes span Ala-18–Ala-38, Leu-39–Leu-59, Thr-63–Val-83, Leu-86–Val-106, Ala-125–Leu-145, and Pro-182–Gly-202.

It belongs to the NqrDE/RnfAE family. In terms of assembly, the complex is composed of six subunits: RsxA, RsxB, RsxC, RsxD, RsxE and RsxG.

The protein localises to the cell inner membrane. Its function is as follows. Part of a membrane-bound complex that couples electron transfer with translocation of ions across the membrane. Required to maintain the reduced state of SoxR. The protein is Ion-translocating oxidoreductase complex subunit E of Escherichia coli (strain ATCC 8739 / DSM 1576 / NBRC 3972 / NCIMB 8545 / WDCM 00012 / Crooks).